Reading from the N-terminus, the 688-residue chain is Glycine--tRNA ligase beta subunit (688 aa).

This sequence belongs to the class-II aminoacyl-tRNA synthetase family. As to quaternary structure, tetramer of two alpha and two beta subunits.

It is found in the cytoplasm. It carries out the reaction tRNA(Gly) + glycine + ATP = glycyl-tRNA(Gly) + AMP + diphosphate. This Actinobacillus pleuropneumoniae serotype 7 (strain AP76) protein is Glycine--tRNA ligase beta subunit.